Reading from the N-terminus, the 185-residue chain is Ribose 1,5-bisphosphate phosphokinase PhnN (185 aa).

10–17 (GPSGSGKD) is a binding site for ATP.

It belongs to the ribose 1,5-bisphosphokinase family.

The enzyme catalyses alpha-D-ribose 1,5-bisphosphate + ATP = 5-phospho-alpha-D-ribose 1-diphosphate + ADP. Its pathway is metabolic intermediate biosynthesis; 5-phospho-alpha-D-ribose 1-diphosphate biosynthesis; 5-phospho-alpha-D-ribose 1-diphosphate from D-ribose 5-phosphate (route II): step 3/3. Functionally, catalyzes the phosphorylation of ribose 1,5-bisphosphate to 5-phospho-D-ribosyl alpha-1-diphosphate (PRPP). The protein is Ribose 1,5-bisphosphate phosphokinase PhnN of Pseudomonas paraeruginosa (strain DSM 24068 / PA7) (Pseudomonas aeruginosa (strain PA7)).